We begin with the raw amino-acid sequence, 195 residues long: Protein GrpE (195 aa).

The segment covering 1–14 (MQEPHDQEPIEKQK) has biased composition (basic and acidic residues). A disordered region spans residues 1-45 (MQEPHDQEPIEKQKLPGMDDVLETEHSGTVAGNTERAGEDAAPSL).

It belongs to the GrpE family. Homodimer.

Its subcellular location is the cytoplasm. In terms of biological role, participates actively in the response to hyperosmotic and heat shock by preventing the aggregation of stress-denatured proteins, in association with DnaK and GrpE. It is the nucleotide exchange factor for DnaK and may function as a thermosensor. Unfolded proteins bind initially to DnaJ; upon interaction with the DnaJ-bound protein, DnaK hydrolyzes its bound ATP, resulting in the formation of a stable complex. GrpE releases ADP from DnaK; ATP binding to DnaK triggers the release of the substrate protein, thus completing the reaction cycle. Several rounds of ATP-dependent interactions between DnaJ, DnaK and GrpE are required for fully efficient folding. In Nitrosomonas europaea (strain ATCC 19718 / CIP 103999 / KCTC 2705 / NBRC 14298), this protein is Protein GrpE.